The sequence spans 503 residues: AMP phosphorylase (503 aa).

Residues Gly-168, 194–199 (SRAITG), and Ser-203 each bind AMP. Catalysis depends on Asp-256, which acts as the Proton donor. Residues Ser-264 and Lys-288 each contribute to the AMP site.

The protein belongs to the thymidine/pyrimidine-nucleoside phosphorylase family. Type 2 subfamily.

The enzyme catalyses AMP + phosphate = alpha-D-ribose 1,5-bisphosphate + adenine. It catalyses the reaction CMP + phosphate = cytosine + alpha-D-ribose 1,5-bisphosphate. The catalysed reaction is UMP + phosphate = alpha-D-ribose 1,5-bisphosphate + uracil. Catalyzes the conversion of AMP and phosphate to adenine and ribose 1,5-bisphosphate (R15P). Exhibits phosphorylase activity toward CMP and UMP in addition to AMP. Functions in an archaeal AMP degradation pathway, together with R15P isomerase and RubisCO. This chain is AMP phosphorylase, found in Methanocella arvoryzae (strain DSM 22066 / NBRC 105507 / MRE50).